A 1437-amino-acid polypeptide reads, in one-letter code: Histone-lysine N-methyltransferase NSD3 (1437 aa).

2 disordered regions span residues 121-157 (PHEILEKPSPPQPPPPPSVPQTVIPKKTGSPEIKLKI) and 181-252 (QASE…PVQP). The segment covering 128 to 139 (PSPPQPPPPPSV) has biased composition (pro residues). A Phosphoserine modification is found at Ser150. The KIKL motif lies at 154 to 157 (KLKI). Basic residues predominate over residues 187 to 201 (KSKHESRKEKRKKSN). Positions 202 to 248 (KHDSSRSEERKSHKIPKLEPEEQNRPNERVDTVSEKPREEPVLKEEA) are enriched in basic and acidic residues. Residues Lys218 and Lys245 each participate in a glycyl lysine isopeptide (Lys-Gly) (interchain with G-Cter in SUMO2) cross-link. Residues 270-333 (VGDLVWSKVG…EKRVREYKGH (64 aa)) form the PWWP 1 domain. Disordered regions lie at residues 344-365 (TKQASNHSEKQKIRKPRPQRER) and 406-465 (AKKS…EPPP). A Glycyl lysine isopeptide (Lys-Gly) (interchain with G-Cter in SUMO2) cross-link involves residue Lys413. Polar residues predominate over residues 425–445 (VLNTQPEQTNAGEVASSLSST). Phosphoserine is present on Ser457. Glycyl lysine isopeptide (Lys-Gly) (interchain with G-Cter in SUMO2) cross-links involve residues Lys502 and Lys532. Residues 540–696 (QDRLIISTPN…DSSLSRRGTG (157 aa)) are disordered. Residues 546 to 571 (STPNQRNEKPTQSVSSPEATSGSTGS) show a composition bias toward polar residues. Basic and acidic residues predominate over residues 583-595 (TRSESEKSTEVVP). Ser585, Ser587, and Ser590 each carry phosphoserine. Residue Lys628 forms a Glycyl lysine isopeptide (Lys-Gly) (interchain with G-Cter in SUMO2) linkage. Ser655 bears the Phosphoserine mark. Residues 682 to 692 (DVQSMDSSLSR) show a composition bias toward polar residues. 3 PHD-type zinc fingers span residues 701–748 (DTVC…CKTG), 749–805 (QHPC…CSME), and 862–955 (VGFC…CKAG). N6-acetyllysine is present on Lys790. The region spanning 960 to 1022 (YKQIVWVKLG…QGRVFPYVEG (63 aa)) is the PWWP 2 domain. A coiled-coil region spans residues 1033-1069 (INKTFKKALEEAAKRFQELKAQRESKEALEIEKNSRK). The 51-residue stretch at 1093-1143 (SEIPRCNCKPADENPCGLESECLNRMLQYECHPQVCPAGDRCQNQCFTKRL) folds into the AWS domain. Residues 1145–1262 (PDAEIIKTER…AGMELTFNYN (118 aa)) form the SET domain. Lys1151 is covalently cross-linked (Glycyl lysine isopeptide (Lys-Gly) (interchain with G-Cter in SUMO2)). In terms of domain architecture, Post-SET spans 1269-1285 (GRTECHCGADNCSGFLG). A PHD-type 4; atypical zinc finger spans residues 1321–1368 (EDYCFQCGDGGELVMCDKKDCPKAYHLLCLNLTQPPYGKWECPWHQCD).

Belongs to the class V-like SAM-binding methyltransferase superfamily. Histone-lysine methyltransferase family. SET2 subfamily. In terms of assembly, interacts with BRD4. Interacts (via KIKL motif) with BRD3 (via NET domain). As to expression, highly expressed in brain, heart and skeletal muscle. Expressed at lower level in liver and lung.

It is found in the nucleus. The protein localises to the chromosome. The catalysed reaction is L-lysyl(4)-[histone H3] + 2 S-adenosyl-L-methionine = N(6),N(6)-dimethyl-L-lysyl(4)-[histone H3] + 2 S-adenosyl-L-homocysteine + 2 H(+). It catalyses the reaction L-lysyl(27)-[histone H3] + 2 S-adenosyl-L-methionine = N(6),N(6)-dimethyl-L-lysyl(27)-[histone H3] + 2 S-adenosyl-L-homocysteine + 2 H(+). Its function is as follows. Histone methyltransferase. Preferentially dimethylates 'Lys-4' and 'Lys-27' of histone H3 forming H3K4me2 and H3K27me2. H3 'Lys-4' methylation represents a specific tag for epigenetic transcriptional activation, while 'Lys-27' is a mark for transcriptional repression. In Homo sapiens (Human), this protein is Histone-lysine N-methyltransferase NSD3.